Reading from the N-terminus, the 921-residue chain is TRPM8 channel-associated factor 1 (921 aa).

One can recognise a Peptidase M60 domain in the interval 542-841; sequence YCWMSTGLYI…TYLQLQEAFG (300 aa).

The protein belongs to the TCAF family. Interacts with TRPM8 (via N-terminus and C-terminus domains); the interaction inhibits TRPM8 channel activity. Interacts with TRPV6. Isoform 2 is expressed in the prostate and strongly expressed in cancerous prostate samples.

It is found in the cell membrane. Functionally, positively regulates the plasma membrane cation channel TRPM8 activity. Involved in the recruitment of TRPM8 to the cell surface. Promotes prostate cancer cell migration inhibition in a TRPM8-dependent manner. The protein is TRPM8 channel-associated factor 1 of Homo sapiens (Human).